The primary structure comprises 371 residues: Queuine tRNA-ribosyltransferase (371 aa).

Asp-89 acts as the Proton acceptor in catalysis. Substrate contacts are provided by residues 89–93, Asp-143, Gln-185, and Gly-212; that span reads DSGGF. Positions 243–249 are RNA binding; it reads GVGKPED. The active-site Nucleophile is the Asp-262. Residues 267-271 form an RNA binding; important for wobble base 34 recognition region; it reads TRNAR. Zn(2+) contacts are provided by Cys-300, Cys-302, Cys-305, and His-331.

Belongs to the queuine tRNA-ribosyltransferase family. In terms of assembly, homodimer. Within each dimer, one monomer is responsible for RNA recognition and catalysis, while the other monomer binds to the replacement base PreQ1. It depends on Zn(2+) as a cofactor.

The enzyme catalyses 7-aminomethyl-7-carbaguanine + guanosine(34) in tRNA = 7-aminomethyl-7-carbaguanosine(34) in tRNA + guanine. It participates in tRNA modification; tRNA-queuosine biosynthesis. Functionally, catalyzes the base-exchange of a guanine (G) residue with the queuine precursor 7-aminomethyl-7-deazaguanine (PreQ1) at position 34 (anticodon wobble position) in tRNAs with GU(N) anticodons (tRNA-Asp, -Asn, -His and -Tyr). Catalysis occurs through a double-displacement mechanism. The nucleophile active site attacks the C1' of nucleotide 34 to detach the guanine base from the RNA, forming a covalent enzyme-RNA intermediate. The proton acceptor active site deprotonates the incoming PreQ1, allowing a nucleophilic attack on the C1' of the ribose to form the product. After dissociation, two additional enzymatic reactions on the tRNA convert PreQ1 to queuine (Q), resulting in the hypermodified nucleoside queuosine (7-(((4,5-cis-dihydroxy-2-cyclopenten-1-yl)amino)methyl)-7-deazaguanosine). The sequence is that of Queuine tRNA-ribosyltransferase from Azotobacter vinelandii (strain DJ / ATCC BAA-1303).